The primary structure comprises 351 residues: S-adenosylmethionine:tRNA ribosyltransferase-isomerase (351 aa).

Belongs to the QueA family. In terms of assembly, monomer.

The protein localises to the cytoplasm. It carries out the reaction 7-aminomethyl-7-carbaguanosine(34) in tRNA + S-adenosyl-L-methionine = epoxyqueuosine(34) in tRNA + adenine + L-methionine + 2 H(+). It functions in the pathway tRNA modification; tRNA-queuosine biosynthesis. In terms of biological role, transfers and isomerizes the ribose moiety from AdoMet to the 7-aminomethyl group of 7-deazaguanine (preQ1-tRNA) to give epoxyqueuosine (oQ-tRNA). The sequence is that of S-adenosylmethionine:tRNA ribosyltransferase-isomerase from Hyphomonas neptunium (strain ATCC 15444).